Consider the following 472-residue polypeptide: ATP synthase subunit beta (472 aa).

149-156 (GGAGVGKT) serves as a coordination point for ATP.

It belongs to the ATPase alpha/beta chains family. In terms of assembly, F-type ATPases have 2 components, CF(1) - the catalytic core - and CF(0) - the membrane proton channel. CF(1) has five subunits: alpha(3), beta(3), gamma(1), delta(1), epsilon(1). CF(0) has three main subunits: a(1), b(2) and c(9-12). The alpha and beta chains form an alternating ring which encloses part of the gamma chain. CF(1) is attached to CF(0) by a central stalk formed by the gamma and epsilon chains, while a peripheral stalk is formed by the delta and b chains.

It is found in the cell inner membrane. It carries out the reaction ATP + H2O + 4 H(+)(in) = ADP + phosphate + 5 H(+)(out). Produces ATP from ADP in the presence of a proton gradient across the membrane. The catalytic sites are hosted primarily by the beta subunits. The sequence is that of ATP synthase subunit beta from Pelagibacter ubique (strain HTCC1062).